A 406-amino-acid polypeptide reads, in one-letter code: Nodal homolog (406 aa).

The N-terminal stretch at 1–18 is a signal peptide; that stretch reads MAFLTAVLYLGFACISQG. The propeptide occupies 19-281; that stretch reads LPTWPDRVES…RVPGIRRHRR (263 aa). Asn71, Asn136, and Asn172 each carry an N-linked (GlcNAc...) asparagine glycan. The interval 195 to 222 is disordered; sequence KERAERGSGMSNAEFIDAPGPSQQYNPH. Intrachain disulfides connect Cys306-Cys372, Cys335-Cys403, and Cys339-Cys405. N-linked (GlcNAc...) asparagine glycosylation is present at Asn344.

The protein belongs to the TGF-beta family. Homodimer; disulfide-linked. Interacts with, and is inhibited by cer1 and gdf10/bmp3b. As to expression, in the first phase of expression, localized to the vegetal region of the blastula. During gastrulation (stage 10.5), this expression disappears and instead becomes localized to the dorsal marginal zone, with enrichment in the organizer. During the second phase of expression in neurulae and tailbud embryos, expression restarts firstly in two symmetric patches near the posterior end of the notochord, and then in a large asymmetrical domain in the left lateral plate mesoderm.

It localises to the secreted. Its function is as follows. Cooperation and regulatory loops of multiple nodals are essential for mesendoderm patterning in early embryos. Essential for mesoderm formation and axial patterning during embryonic development. Activates the activin-like signaling pathway to induce dorsal and ventral mesoderm in animal cap ectoderm. In addition, also dorsalizes ventral marginal zone (VMZ) tissues during gastrulation. Acts in a downstream signaling cascade via cripto and cer1 to mediate cardiogenesis in embryonic mesoderm. Directs the orientation of the left-right axis by driving the left-specific gene cascade in the left lateral plate mesoderm. In Xenopus laevis (African clawed frog), this protein is Nodal homolog.